A 283-amino-acid polypeptide reads, in one-letter code: Isochorismatase domain-containing protein 1 (283 aa).

It belongs to the isochorismatase family.

This is Isochorismatase domain-containing protein 1 (isoc1) from Salmo salar (Atlantic salmon).